A 219-amino-acid chain; its full sequence is Mediator of RNA polymerase II transcription subunit 20b (219 aa).

The protein belongs to the Mediator complex subunit 20 family. As to quaternary structure, component of the Mediator complex.

It localises to the nucleus. In terms of biological role, component of the Mediator complex, a coactivator involved in the regulated transcription of nearly all RNA polymerase II-dependent genes. Mediator functions as a bridge to convey information from gene-specific regulatory proteins to the basal RNA polymerase II transcription machinery. The Mediator complex, having a compact conformation in its free form, is recruited to promoters by direct interactions with regulatory proteins and serves for the assembly of a functional preinitiation complex with RNA polymerase II and the general transcription factors. The sequence is that of Mediator of RNA polymerase II transcription subunit 20b (MED20B) from Arabidopsis thaliana (Mouse-ear cress).